Here is a 64-residue protein sequence, read N- to C-terminus: DNA gyrase inhibitor YacG (64 aa).

Zn(2+)-binding residues include Cys-6, Cys-9, Cys-25, and Cys-29.

It belongs to the DNA gyrase inhibitor YacG family. Interacts with GyrB. Requires Zn(2+) as cofactor.

Inhibits all the catalytic activities of DNA gyrase by preventing its interaction with DNA. Acts by binding directly to the C-terminal domain of GyrB, which probably disrupts DNA binding by the gyrase. In Haemophilus influenzae (strain ATCC 51907 / DSM 11121 / KW20 / Rd), this protein is DNA gyrase inhibitor YacG.